A 208-amino-acid chain; its full sequence is AN1-type zinc finger protein 6 (208 aa).

The segment at 8–42 (SQVPMLCSTGCGFYGNPRTNGMCSVCYKEHLQRQN) adopts an A20-type zinc-finger fold. Residues Cys14, Cys18, Cys30, and Cys33 each coordinate Zn(2+). Residues 41–68 (QNSSNGRISPPATSVSSLSESLPVQCTD) show a composition bias toward polar residues. The tract at residues 41 to 140 (QNSSNGRISP…PSEEQSKSLE (100 aa)) is disordered. Ser49 carries the phosphoserine modification. Over residues 80–94 (STSSSMQPSPVSNQS) the composition is skewed to low complexity. Polar residues-rich tracts occupy residues 95–110 (LLSE…STSV) and 120–133 (VQAS…QPSE). An AN1-type zinc finger spans residues 143–189 (KQKKNRCFMCRKKVGLTGFECRCGNVYCGVHRYSDVHNCSYNYKADA). The Zn(2+) site is built by Cys149, Cys152, Cys163, Cys165, Cys170, His173, His179, and Cys181. The residue at position 204 (Lys204) is an N6-acetyllysine.

As to quaternary structure, interacts with PKN1. Interacts with TRAF2. Interacts with mono- and polyubiquitin. Interacts with PEX6. Interacts with PEX5 (Cys-linked ubiquitinated). Widely expressed with high level in heart, skeletal muscle, liver, kidney and placenta.

It is found in the cytoplasm. Its function is as follows. Involved in regulation of TNF-alpha induced NF-kappa-B activation and apoptosis. Involved in modulation of 'Lys-48'-linked polyubiquitination status of TRAF2 and decreases association of TRAF2 with RIPK1. Required for PTS1 target sequence-dependent protein import into peroxisomes and PEX5 stability; may cooperate with PEX6. In vitro involved in PEX5 export from the cytosol to peroxisomes. The polypeptide is AN1-type zinc finger protein 6 (ZFAND6) (Homo sapiens (Human)).